Reading from the N-terminus, the 122-residue chain is Large ribosomal subunit protein uL14 (122 aa).

The protein belongs to the universal ribosomal protein uL14 family. Part of the 50S ribosomal subunit. Forms a cluster with proteins L3 and L19. In the 70S ribosome, L14 and L19 interact and together make contacts with the 16S rRNA in bridges B5 and B8.

Its function is as follows. Binds to 23S rRNA. Forms part of two intersubunit bridges in the 70S ribosome. The polypeptide is Large ribosomal subunit protein uL14 (Rippkaea orientalis (strain PCC 8801 / RF-1) (Cyanothece sp. (strain PCC 8801))).